We begin with the raw amino-acid sequence, 92 residues long: Small ribosomal subunit protein uS19c (92 aa).

The disordered stretch occupies residues Glu73 to Arg92. Residues Tyr80–Arg92 show a composition bias toward basic residues.

Belongs to the universal ribosomal protein uS19 family.

The protein resides in the plastid. It localises to the chloroplast. Its function is as follows. Protein S19 forms a complex with S13 that binds strongly to the 16S ribosomal RNA. This Chlamydomonas reinhardtii (Chlamydomonas smithii) protein is Small ribosomal subunit protein uS19c (rps19).